The sequence spans 360 residues: Tyrosine-protein phosphatase non-receptor type 7 (360 aa).

The tract at residues 1 to 37 is disordered; the sequence is MVQAHGGRSRAQPLTLSLGAAMTQPPPEKTPAKKHVR. An interaction with MAP kinases region spans residues 38–51; that stretch reads LQERRGSNVALMLD. Residue Ser44 is modified to Phosphoserine. At Thr66 the chain carries Phosphothreonine. Phosphoserine occurs at positions 93, 110, and 143. Residues 97-350 form the Tyrosine-protein phosphatase domain; sequence LEEEFLKIPS…QFLHHTLALY (254 aa). Residues Asp257, 291-297, and Gln335 contribute to the substrate site; that span reads CSAGIGR. Cys291 functions as the Phosphocysteine intermediate in the catalytic mechanism. Cys291 bears the Cysteine sulfenic acid (-SOH) mark.

This sequence belongs to the protein-tyrosine phosphatase family. Non-receptor class subfamily. Monomer. Interacts with MAPK1, MAPK3 and several other MAP kinases. Post-translationally, phosphorylated on serine residues in resting T-cells. Phosphorylation increases upon exposure to stimuli that increase intracellular cAMP levels. Phosphorylation leads to dissociation of bound MAP kinases. Oxidized at active site cysteine. Treatment with pervanadate (vanadate and H(2)O(2)) or with antigen enhanced oxidation of active site cysteine. In terms of tissue distribution, expressed exclusively in thymus and spleen.

It is found in the cytoplasm. The protein localises to the cytoskeleton. It catalyses the reaction O-phospho-L-tyrosyl-[protein] + H2O = L-tyrosyl-[protein] + phosphate. Its activity is regulated as follows. Inhibited in cells after FCER1A triggering. Protein phosphatase that acts preferentially on tyrosine-phosphorylated MAPK1. Plays a role in the regulation of T and B-lymphocyte development and signal transduction. This Homo sapiens (Human) protein is Tyrosine-protein phosphatase non-receptor type 7 (PTPN7).